A 240-amino-acid polypeptide reads, in one-letter code: LexA repressor (240 aa).

A DNA-binding region (H-T-H motif) is located at residues F26–T46. Residues S161 and K199 each act as for autocatalytic cleavage activity in the active site.

This sequence belongs to the peptidase S24 family. In terms of assembly, homodimer.

It carries out the reaction Hydrolysis of Ala-|-Gly bond in repressor LexA.. In terms of biological role, represses a number of genes involved in the response to DNA damage (SOS response), including recA and lexA. In the presence of single-stranded DNA, RecA interacts with LexA causing an autocatalytic cleavage which disrupts the DNA-binding part of LexA, leading to derepression of the SOS regulon and eventually DNA repair. This is LexA repressor from Brucella ovis (strain ATCC 25840 / 63/290 / NCTC 10512).